The sequence spans 406 residues: Argininosuccinate synthase (406 aa).

ATP-binding positions include 11–19 (AYSGGLDTS) and Ala38. L-citrulline contacts are provided by Tyr91 and Ser96. Gly121 contributes to the ATP binding site. 3 residues coordinate L-aspartate: Thr123, Asn127, and Asp128. Residue Asn127 participates in L-citrulline binding. The L-citrulline site is built by Arg131, Ser181, Ser190, Glu266, and Tyr278.

It belongs to the argininosuccinate synthase family. Type 1 subfamily. Homotetramer.

The protein resides in the cytoplasm. The enzyme catalyses L-citrulline + L-aspartate + ATP = 2-(N(omega)-L-arginino)succinate + AMP + diphosphate + H(+). The protein operates within amino-acid biosynthesis; L-arginine biosynthesis; L-arginine from L-ornithine and carbamoyl phosphate: step 2/3. This is Argininosuccinate synthase from Campylobacter jejuni subsp. jejuni serotype O:2 (strain ATCC 700819 / NCTC 11168).